Reading from the N-terminus, the 131-residue chain is Large ribosomal subunit protein bL17 (131 aa).

It belongs to the bacterial ribosomal protein bL17 family. In terms of assembly, part of the 50S ribosomal subunit. Contacts protein L32.

This chain is Large ribosomal subunit protein bL17, found in Janthinobacterium sp. (strain Marseille) (Minibacterium massiliensis).